Here is a 219-residue protein sequence, read N- to C-terminus: Deoxyribose-phosphate aldolase (219 aa).

Aspartate 93 acts as the Proton donor/acceptor in catalysis. The active-site Schiff-base intermediate with acetaldehyde is lysine 154. Residue lysine 179 is the Proton donor/acceptor of the active site.

The protein belongs to the DeoC/FbaB aldolase family. DeoC type 1 subfamily.

It localises to the cytoplasm. The enzyme catalyses 2-deoxy-D-ribose 5-phosphate = D-glyceraldehyde 3-phosphate + acetaldehyde. It functions in the pathway carbohydrate degradation; 2-deoxy-D-ribose 1-phosphate degradation; D-glyceraldehyde 3-phosphate and acetaldehyde from 2-deoxy-alpha-D-ribose 1-phosphate: step 2/2. In terms of biological role, catalyzes a reversible aldol reaction between acetaldehyde and D-glyceraldehyde 3-phosphate to generate 2-deoxy-D-ribose 5-phosphate. The sequence is that of Deoxyribose-phosphate aldolase from Haloquadratum walsbyi (strain DSM 16790 / HBSQ001).